A 660-amino-acid chain; its full sequence is Bifunctional polymyxin resistance protein ArnA (660 aa).

The segment at 1–304 is formyltransferase ArnAFT; sequence MKTVVFAYHD…TLGLVQGSRL (304 aa). 86 to 88 is a (6R)-10-formyltetrahydrofolate binding site; that stretch reads HLI. The active-site Proton donor; for formyltransferase activity is His-104. Residues Arg-114 and 136 to 140 each bind (6R)-10-formyltetrahydrofolate; that span reads VKRAD. The tract at residues 314–660 is dehydrogenase ArnADH; it reads RRTRVLILGV…RTVDLTDKPS (347 aa). Residues Asp-347 and 368–369 each bind NAD(+); that span reads DI. UDP-alpha-D-glucuronate contacts are provided by residues Ala-393, Tyr-398, and 432–433; that span reads TS. The active-site Proton acceptor; for decarboxylase activity is the Glu-434. Residues Arg-460, Asn-492, 526-535, and Tyr-613 contribute to the UDP-alpha-D-glucuronate site; that span reads KLIDGGKQKR. Arg-619 functions as the Proton donor; for decarboxylase activity in the catalytic mechanism.

In the N-terminal section; belongs to the Fmt family. UDP-L-Ara4N formyltransferase subfamily. It in the C-terminal section; belongs to the NAD(P)-dependent epimerase/dehydratase family. UDP-glucuronic acid decarboxylase subfamily. As to quaternary structure, homohexamer, formed by a dimer of trimers.

It carries out the reaction UDP-alpha-D-glucuronate + NAD(+) = UDP-beta-L-threo-pentopyranos-4-ulose + CO2 + NADH. The enzyme catalyses UDP-4-amino-4-deoxy-beta-L-arabinose + (6R)-10-formyltetrahydrofolate = UDP-4-deoxy-4-formamido-beta-L-arabinose + (6S)-5,6,7,8-tetrahydrofolate + H(+). Its pathway is nucleotide-sugar biosynthesis; UDP-4-deoxy-4-formamido-beta-L-arabinose biosynthesis; UDP-4-deoxy-4-formamido-beta-L-arabinose from UDP-alpha-D-glucuronate: step 1/3. It functions in the pathway nucleotide-sugar biosynthesis; UDP-4-deoxy-4-formamido-beta-L-arabinose biosynthesis; UDP-4-deoxy-4-formamido-beta-L-arabinose from UDP-alpha-D-glucuronate: step 3/3. It participates in bacterial outer membrane biogenesis; lipopolysaccharide biosynthesis. In terms of biological role, bifunctional enzyme that catalyzes the oxidative decarboxylation of UDP-glucuronic acid (UDP-GlcUA) to UDP-4-keto-arabinose (UDP-Ara4O) and the addition of a formyl group to UDP-4-amino-4-deoxy-L-arabinose (UDP-L-Ara4N) to form UDP-L-4-formamido-arabinose (UDP-L-Ara4FN). The modified arabinose is attached to lipid A and is required for resistance to polymyxin and cationic antimicrobial peptides. The protein is Bifunctional polymyxin resistance protein ArnA of Escherichia coli (strain K12 / MC4100 / BW2952).